Consider the following 151-residue polypeptide: UPF0178 protein YaiI (151 aa).

Belongs to the UPF0178 family.

The sequence is that of UPF0178 protein YaiI from Salmonella paratyphi C (strain RKS4594).